The sequence spans 320 residues: o-succinylbenzoate synthase (320 aa).

Lys-133 acts as the Proton donor in catalysis. Mg(2+) is bound by residues Asp-161, Glu-190, and Asp-213. The active-site Proton acceptor is Lys-235.

The protein belongs to the mandelate racemase/muconate lactonizing enzyme family. MenC type 1 subfamily. It depends on a divalent metal cation as a cofactor.

It carries out the reaction (1R,6R)-6-hydroxy-2-succinyl-cyclohexa-2,4-diene-1-carboxylate = 2-succinylbenzoate + H2O. Its pathway is quinol/quinone metabolism; 1,4-dihydroxy-2-naphthoate biosynthesis; 1,4-dihydroxy-2-naphthoate from chorismate: step 4/7. It functions in the pathway quinol/quinone metabolism; menaquinone biosynthesis. In terms of biological role, converts 2-succinyl-6-hydroxy-2,4-cyclohexadiene-1-carboxylate (SHCHC) to 2-succinylbenzoate (OSB). The chain is o-succinylbenzoate synthase from Salmonella heidelberg (strain SL476).